Reading from the N-terminus, the 397-residue chain is Elongation factor Tu (397 aa).

In terms of domain architecture, tr-type G spans 10 to 206; that stretch reads KPHCNIGTIG…AVDTWIPDPQ (197 aa). Positions 19 to 26 are G1; sequence GHVDHGKT. 19-26 provides a ligand contact to GTP; it reads GHVDHGKT. Residue Thr26 participates in Mg(2+) binding. Residues 61–65 are G2; the sequence is GITIS. The G3 stretch occupies residues 82-85; that stretch reads DCPG. Residues 82 to 86 and 137 to 140 contribute to the GTP site; these read DCPGH and NKCD. Positions 137–140 are G4; sequence NKCD. The interval 175–177 is G5; the sequence is SAL.

This sequence belongs to the TRAFAC class translation factor GTPase superfamily. Classic translation factor GTPase family. EF-Tu/EF-1A subfamily. Monomer.

Its subcellular location is the cytoplasm. The catalysed reaction is GTP + H2O = GDP + phosphate + H(+). Its function is as follows. GTP hydrolase that promotes the GTP-dependent binding of aminoacyl-tRNA to the A-site of ribosomes during protein biosynthesis. The sequence is that of Elongation factor Tu from Lachnoclostridium phytofermentans (strain ATCC 700394 / DSM 18823 / ISDg) (Clostridium phytofermentans).